The sequence spans 177 residues: FMRFamide-like neuropeptides 7 (177 aa).

Positions 1-19 (MLGSRFLLLALGLLVLVLA) are cleaved as a signal peptide. Positions 20–49 (EESAEQQVQEPTELEKSGEQLSEEDLIDEQ) are excised as a propeptide. The disordered stretch occupies residues 25–106 (QQVQEPTELE…RSSMVRFGKR (82 aa)). Residues Phe62, Phe75, Phe89, Phe103, Phe117, and Phe130 each carry the phenylalanine amide modification. The residue at position 143 (Leu143) is a Leucine amide. Phenylalanine amide is present on Phe157. A propeptide spanning residues 161 to 177 (SMEFEMQSNEKNIEDSE) is cleaved from the precursor.

It belongs to the FARP (FMRFamide related peptide) family. In terms of tissue distribution, expressed in the ASI sensory neurons, the ALA interneuron and the AVG interneuron from where secretion occurs. Expression in the ASI neurons is necessary and sufficient to maintain serotonin-induced fat loss.

The protein localises to the secreted. In terms of biological role, FMRFamide-like neuropeptides. Stimulates serotonin-induced fat loss by binding to and activating the npr-22 receptor which leads to induction of the atgl-1 lipase and subsequent fat loss. Together with atfs-1, negatively regulates the expression of the transcription regulator hlh-11, to promote expression of atgl-1, and thus atgl-1-dependent fat oxidation in response to mitochondrial stress. Its function is as follows. TPMQRSSMVRF-amide: Acts as a ligand for the npr-22 receptor in vitro. SPMQRSSMVRF-amide: Acts as a ligand for the npr-22 receptor in vitro. Functionally, acts as a ligand for the npr-22 receptor in vitro. The polypeptide is FMRFamide-like neuropeptides 7 (Caenorhabditis elegans).